The sequence spans 365 residues: Phosphate acyltransferase (365 aa).

This sequence belongs to the PlsX family. Homodimer. Probably interacts with PlsY.

It is found in the cytoplasm. The enzyme catalyses a fatty acyl-[ACP] + phosphate = an acyl phosphate + holo-[ACP]. The protein operates within lipid metabolism; phospholipid metabolism. In terms of biological role, catalyzes the reversible formation of acyl-phosphate (acyl-PO(4)) from acyl-[acyl-carrier-protein] (acyl-ACP). This enzyme utilizes acyl-ACP as fatty acyl donor, but not acyl-CoA. In Picosynechococcus sp. (strain ATCC 27264 / PCC 7002 / PR-6) (Agmenellum quadruplicatum), this protein is Phosphate acyltransferase.